The primary structure comprises 252 residues: Insulin-induced gene 1 protein (252 aa).

At 1 to 59 (MPRLESGAWSCSCAARARHAARPGEAAPKADAMQSPSPSAGRAEREASGGSATTWRQHL) the chain is on the cytoplasmic side. Residues 22–48 (RPGEAAPKADAMQSPSPSAGRAEREAS) form a disordered region. A helical transmembrane segment spans residues 60-82 (VQRSVVLFVVGAFMALVLNLLQI). The Extracellular portion of the chain corresponds to 83–101 (QRNVTLFPDEVIATLFSSA). Residues 102 to 119 (WWVPPCCGTAAAVVGLLY) traverse the membrane as a helical segment. At 120 to 134 (PCIDSHLGEPHKFKR) the chain is on the cytoplasmic side. The chain crosses the membrane as a helical span at residues 135 to 157 (EWASVMRCIAVFVGINHASAKLD). The Extracellular portion of the chain corresponds to 158–160 (FAN). The chain crosses the membrane as a helical span at residues 161–179 (NVQLSLTLAALSLGLWWTF). Residues 180–184 (DRSRS) lie on the Cytoplasmic side of the membrane. Residues 185–206 (GLGLGITIAFVATLITQFLVYN) form a helical membrane-spanning segment. At 207–220 (GVYQYTSPDFLYIR) the chain is on the extracellular side. The chain crosses the membrane as a helical span at residues 221–238 (SWLPCIFFSGGVTVGNIG). The Cytoplasmic portion of the chain corresponds to 239-252 (RQLAMGIPEKPHND). A KxHxx motif is present at residues 246–252 (PEKPHND).

Belongs to the INSIG family. As to quaternary structure, interacts with SCAP; interaction is direct and only takes place in the presence of sterols; it prevents interaction between SCAP and the coat protein complex II (COPII). Associates with the SCAP-SREBP complex; association is mediated via its interaction with SCAP and only takes place in the presence of sterols.

Its subcellular location is the endoplasmic reticulum membrane. Its function is as follows. Oxysterol-binding protein that mediates feedback control of cholesterol synthesis by controlling both endoplasmic reticulum to Golgi transport of SCAP and degradation of HMGCR. Acts as a negative regulator of cholesterol biosynthesis by mediating the retention of the SCAP-SREBP complex in the endoplasmic reticulum, thereby blocking the processing of sterol regulatory element-binding proteins (SREBPs). Binds oxysterol, including 25-hydroxycholesterol, regulating interaction with SCAP and retention of the SCAP-SREBP complex in the endoplasmic reticulum. In presence of oxysterol, interacts with SCAP, retaining the SCAP-SREBP complex in the endoplasmic reticulum, thereby preventing SCAP from escorting SREBPs to the Golgi. Sterol deprivation reduces oxysterol-binding, disrupting the interaction between INSIG1 and SCAP, thereby promoting Golgi transport of the SCAP-SREBP complex, followed by processing and nuclear translocation of SREBPs. Also regulates cholesterol synthesis by regulating degradation of HMGCR. The polypeptide is Insulin-induced gene 1 protein (Gallus gallus (Chicken)).